Here is a 443-residue protein sequence, read N- to C-terminus: ATP-dependent protease ATPase subunit HslU (443 aa).

ATP is bound by residues Ile18, 60–65, Asp256, Glu321, and Arg393; that span reads GVGKTE.

The protein belongs to the ClpX chaperone family. HslU subfamily. A double ring-shaped homohexamer of HslV is capped on each side by a ring-shaped HslU homohexamer. The assembly of the HslU/HslV complex is dependent on binding of ATP.

The protein resides in the cytoplasm. ATPase subunit of a proteasome-like degradation complex; this subunit has chaperone activity. The binding of ATP and its subsequent hydrolysis by HslU are essential for unfolding of protein substrates subsequently hydrolyzed by HslV. HslU recognizes the N-terminal part of its protein substrates and unfolds these before they are guided to HslV for hydrolysis. This chain is ATP-dependent protease ATPase subunit HslU, found in Pectobacterium carotovorum subsp. carotovorum (strain PC1).